A 511-amino-acid chain; its full sequence is Maturase K (511 aa).

It belongs to the intron maturase 2 family. MatK subfamily.

Its subcellular location is the plastid. It is found in the chloroplast. Its function is as follows. Usually encoded in the trnK tRNA gene intron. Probably assists in splicing its own and other chloroplast group II introns. The sequence is that of Maturase K from Hordeum murinum subsp. leporinum (Mouse barley).